Here is a 441-residue protein sequence, read N- to C-terminus: ATP-dependent RNA helicase SUB2 (441 aa).

The segment covering 1 to 17 (MSHEGEEELLDYSDSEE) has biased composition (acidic residues). The segment at 1–47 (MSHEGEEELLDYSDSEEIALPSTTVESGSNGDAKAETTTVKEENTEQ) is disordered. Positions 21 to 30 (PSTTVESGSN) are enriched in polar residues. A compositionally biased stretch (basic and acidic residues) spans 33 to 46 (AKAETTTVKEENTE). A Q motif motif is present at residues 57 to 85 (TGFRDFLLKPELLRAIVDCGFEHPSEVQQ). Positions 88–263 (IPQSILGTDV…KKFMSSPLEI (176 aa)) constitute a Helicase ATP-binding domain. 101 to 108 (AKAGVGKT) is a binding site for ATP. The DECD box motif lies at 210–213 (DECD). The Helicase C-terminal domain occupies 275–436 (GLQQYYVDVE…PYPAEGVDPS (162 aa)).

It belongs to the DEAD box helicase family. DECD subfamily.

The protein localises to the nucleus. It carries out the reaction ATP + H2O = ADP + phosphate + H(+). In terms of biological role, ATP-binding RNA helicase involved in transcription elongation and required for the export of mRNA out of the nucleus. SUB2 also plays a role in pre-mRNA splicing and spliceosome assembly. May be involved in rDNA and telomeric silencing, and maintenance of genome integrity. This chain is ATP-dependent RNA helicase SUB2 (SUB2), found in Yarrowia lipolytica (strain CLIB 122 / E 150) (Yeast).